The following is a 575-amino-acid chain: Jasmonoyl--L-amino acid synthetase JAR1 (575 aa).

Residues 10 to 30 (MNRVIDEFDEMTRNAHQVQKQ) adopt a coiled-coil conformation. Residue S98 participates in ATP binding. Position 101 (S101) interacts with jasmonate. ATP-binding positions include M118, T121, G163, N168, and 331-336 (GSSEGW). Residue 166–170 (TTNVY) participates in an L-alpha-amino acid binding. Residue 328–331 (HDYG) coordinates jasmonate. An L-alpha-amino acid is bound at residue 530-534 (KIQEH). ATP is bound at residue K557.

The protein belongs to the IAA-amido conjugating enzyme family. In terms of assembly, interacts with GSTU20/FIP1 under continuous far red (cFR) light; this binding increases its activity and determines the priority of substrate binding.

It localises to the cytoplasm. It carries out the reaction a jasmonate + an L-alpha-amino acid + ATP = a jasmonyl-L-amino acid + AMP + diphosphate + H(+). The catalysed reaction is (+)-7-isojasmonate + L-isoleucine + ATP = L-isoleucine-(+)-7-isojasmonate + AMP + diphosphate + H(+). Its activity is regulated as follows. Activated by GSTU20/FIP1. Its function is as follows. Catalyzes the synthesis of jasmonates-amino acid conjugates by adenylation; can use Ile and, in vitro at least, Val, Leu and Phe as conjugating amino acids on jasmonic acid (JA) and 9,10-dihydro-JA substrates, and to a lower extent, on 3-oxo-2-(2Z-pentenyl)-cyclopentane-1-butyric acid (OPC-4) and 12-hydroxy-JA (12-OH-JA). Can synthesize adenosine 5-tetraphosphate in vitro. Required for the JA-mediated signaling pathway that regulates many developmental and defense mechanisms, including growth root inhibition, vegetative storage proteins (VSPs) accumulation, induced systemic resistance (ISR), response to wounding and herbivores, tolerance to ozone O(3) (probably having a role in lesion containment). Plays an important role in the accumulation of JA-Ile in response to wounding, both locally and systemically; promotes JA responding genes especially in distal part of wounded plants, via the JA-Ile-stimulated degradation of JAZ repressor proteins by the SCF(COI)E3 ubiquitin-protein ligase pathway. Involved in the apoptosis-like programmed cell death (PCD) induced by fungal toxin fumonisin B1-mediated (FB1). Required for volatile compounds (C6-aldehydes and allo-ocimene)-mediated defense activation. Involved in the non-pathogenic rhizobacterium-mediated ISR (defense priming) by P.fluorescens (strains CHAOr and WCS417r) and P.putida LSW17S against infection leaf pathogens such as P.syringae pv. tomato and H.parasitica. Required for the JA-dependent resistance to fungi such as P.irregulare, U.vignae and U.appendiculatus. Necessary to induce systemic resistance against R.solanaceraum and P.syringae pv. tomato with P.oligandrum (a non-pathogenic biocontrol agent) cell wall protein fraction (CWP). Mediates PGIP2 accumulation in response to B.cinerea infection and thus contributes to resistance against this pathogen. Modulates the UV-B alteration of leaves attractiveness to diamondback moths P.xylostella leading to insect oviposition. Involved in the regulation of far-red light influence on development, being an actor of the interplay between light and JA signaling. Seems necessary for the salicylic acid (SA)-mediated, NPR1-independent resistance pathway. May contribute to the chitin-elicited pathway. Contributes to the sensitivity toward F.graminearum. In Arabidopsis thaliana (Mouse-ear cress), this protein is Jasmonoyl--L-amino acid synthetase JAR1.